We begin with the raw amino-acid sequence, 563 residues long: Efflux pump FUS6 (563 aa).

The interval 1–30 is disordered; sequence MPQPDKMAAVNNAMPQPAPEKSLSSDPQPE. Helical transmembrane passes span 39–59, 75–95, 105–125, 138–158, and 167–187; these read WLIFVAIALTTFLAALDTSII, LYVWIIDAYLLASTATIPIFA, SLTLIAVCIFTLGSGLCGGAH, GIGGGGILTMSEIVVCDMVSI, and IIGGVWAIAAVVAPVMGGAFA. N-linked (GlcNAc...) asparagine glycosylation is present at Asn-189. 3 helical membrane passes run 194–214, 233–253, and 261–281; these read WIFYINLPIAGVSLVALGLFL, WGGSVLLIGSVTSIVLALSWG, and GWQTIVPLVIGLLALVAFFAY. N-linked (GlcNAc...) asparagine glycosylation is present at Asn-299. 6 consecutive transmembrane segments (helical) span residues 305 to 325, 340 to 360, 368 to 388, 401 to 421, 433 to 453, and 509 to 529; these read LLVISFIHSLLLYWVCYFLPV, VMLFPIACTSAPAGVAAGITI, VWHFTGFVLMSIACGLFTLLD, ILFGVGTGTVFTSTLPPILAS, AWTFIRNFGSIWGVAIPAAVF, and KVVWQVSLAFCLLGFILCFFV. Residue Asn-553 is glycosylated (N-linked (GlcNAc...) asparagine).

The protein belongs to the major facilitator superfamily. TCR/Tet family.

It is found in the membrane. In terms of biological role, efflux pump; part of the gene cluster that mediates the biosynthesis of the mycotoxin fusarin C. Within the cluster, FUS1, FUS2, FUS8 and FUS9 are sufficient for fusarin production. The other FUS cluster members are not essential for fusarin C biosynthesis. The sequence is that of Efflux pump FUS6 from Gibberella moniliformis (strain M3125 / FGSC 7600) (Maize ear and stalk rot fungus).